The sequence spans 160 residues: Anaerobic nitrite reductase AHB1 (160 aa).

One can recognise a Globin domain in the interval 8–157; the sequence is VFTEEQEALV…LVAAIKAEMN (150 aa). The Homodimerization signature appears at 41 to 45; it reads EIAPT. 6 residues coordinate heme b: S51, K65, H69, R99, S103, and H104. The Homodimerization motif lies at 111–123; it reads DEHFEVAKYALLE.

It belongs to the plant globin family. As to quaternary structure, homodimer. Heme b serves as cofactor. As to expression, expressed in roots and rosette leaves.

Its subcellular location is the cytoplasm. It localises to the nucleus. The catalysed reaction is Fe(III)-heme b-[protein] + nitric oxide + H2O = Fe(II)-heme b-[protein] + nitrite + 2 H(+). Functionally, phytoglobin that reduces nitrite to nitric oxide (NO) under anoxic conditions (e.g. during flooding or in waterlogged soil). May not function as an oxygen storage or transport protein. Has an unusually high affinity for O(2) through an hexacoordinate heme iron because of a very low dissociation constant. This chain is Anaerobic nitrite reductase AHB1, found in Arabidopsis thaliana (Mouse-ear cress).